Here is a 90-residue protein sequence, read N- to C-terminus: MQLITRLCLLTRKHFVKRELLRLVKLDNQLEIDLNQNLKGRGYYLSVFGLKLDKKHLKAVVEKHLKVSCNDAKLTAMITALQQLAQDEKK.

This is an uncharacterized protein from Mycoplasma genitalium (strain ATCC 33530 / DSM 19775 / NCTC 10195 / G37) (Mycoplasmoides genitalium).